Consider the following 490-residue polypeptide: Cytochrome P450 monooxygenase aclL (490 aa).

The helical transmembrane segment at 1–21 (MLFSLGPLTIVYGLVIFVVAK) threads the bilayer. A glycan (N-linked (GlcNAc...) asparagine) is linked at N176. C434 is a binding site for heme.

The protein belongs to the cytochrome P450 family. The cofactor is heme.

The protein resides in the membrane. The protein operates within mycotoxin biosynthesis. In terms of biological role, cytochrome P450 monooxygenase; part of the gene cluster that mediates the biosynthesis of aspirochlorine (or antibiotic A30641), an unusual halogenated spiro compound with distinctive antifungal properties due to selective inhibition of protein biosynthesis, and which is also active against bacteria, viruses, and murine tumor cells. The non-ribosomal peptide synthetase (NRPS) aclP is responsible the formation of the diketopiperazine (DKP) core from the condensation of 2 phenylalanine residues. One Phe residue is tailored into chlorotyrosine by hydroxylation and chlorination, whereas the second Phe undergoes an unprecedented C-C bond cleavage to be converted into glycine. After formation of the DKP, sulfur is incorporated into the DKP by conjugation with glutathione by aclG, followed by its stepwise degradation to the thiol by aclI, aclJ and aclK, and the dithiol oxidation by aclT. In addition, oxygenases (aclB, aclC, aclL and aclO) and O-methyltransferases (aclM and aclU) act as tailoring enzymes to produce the intermediate dechloroaspirochlorine. Ultimately, chlorination of dechloroaspirochlorine by the halogenase aclH is the last step in the aspirochlorine pathway. In Aspergillus oryzae (strain ATCC 42149 / RIB 40) (Yellow koji mold), this protein is Cytochrome P450 monooxygenase aclL.